A 200-amino-acid polypeptide reads, in one-letter code: Glycerol-3-phosphate acyltransferase (200 aa).

A run of 5 helical transmembrane segments spans residues 2–22 (FNIPAVAVSYLIGSLSFAVIV), 51–71 (KAAALTLLGDAAKGLVAVLLA), 84–104 (AIAAVALAALVGHMWPVFFGF), 114–134 (LGVLLALSPATALVCALIWLV), and 158–178 (LFFMPHTSWIFATLAIAILVL).

It belongs to the PlsY family. Probably interacts with PlsX.

It is found in the cell inner membrane. The enzyme catalyses an acyl phosphate + sn-glycerol 3-phosphate = a 1-acyl-sn-glycero-3-phosphate + phosphate. Its pathway is lipid metabolism; phospholipid metabolism. Its function is as follows. Catalyzes the transfer of an acyl group from acyl-phosphate (acyl-PO(4)) to glycerol-3-phosphate (G3P) to form lysophosphatidic acid (LPA). This enzyme utilizes acyl-phosphate as fatty acyl donor, but not acyl-CoA or acyl-ACP. The sequence is that of Glycerol-3-phosphate acyltransferase from Neisseria gonorrhoeae (strain ATCC 700825 / FA 1090).